We begin with the raw amino-acid sequence, 162 residues long: NADH-quinone oxidoreductase subunit I (162 aa).

4Fe-4S ferredoxin-type domains follow at residues 53–83 and 93–122; these read LRRYPNGEERCIACKLCEAVCPAMAITIESE and TRYDIDMIKCIFCGFCEEACPVDAIVETRV. [4Fe-4S] cluster is bound by residues Cys63, Cys66, Cys69, Cys73, Cys102, Cys105, Cys108, and Cys112.

Belongs to the complex I 23 kDa subunit family. As to quaternary structure, NDH-1 is composed of 14 different subunits. Subunits NuoA, H, J, K, L, M, N constitute the membrane sector of the complex. [4Fe-4S] cluster serves as cofactor.

It localises to the cell inner membrane. The catalysed reaction is a quinone + NADH + 5 H(+)(in) = a quinol + NAD(+) + 4 H(+)(out). Its function is as follows. NDH-1 shuttles electrons from NADH, via FMN and iron-sulfur (Fe-S) centers, to quinones in the respiratory chain. The immediate electron acceptor for the enzyme in this species is believed to be ubiquinone. Couples the redox reaction to proton translocation (for every two electrons transferred, four hydrogen ions are translocated across the cytoplasmic membrane), and thus conserves the redox energy in a proton gradient. This Nitrosomonas europaea (strain ATCC 19718 / CIP 103999 / KCTC 2705 / NBRC 14298) protein is NADH-quinone oxidoreductase subunit I.